A 165-amino-acid polypeptide reads, in one-letter code: Glycine cleavage system H protein, mitochondrial (165 aa).

A Lipoyl-binding domain is found at 57–139 (NAIVGISSYA…YEKGWLFKVD (83 aa)). Lysine 98 is subject to N6-lipoyllysine.

It belongs to the GcvH family. As to quaternary structure, the glycine cleavage system is composed of four proteins: P, T, L and H. The cofactor is (R)-lipoate.

It is found in the mitochondrion. Its function is as follows. The glycine cleavage system catalyzes the degradation of glycine. The H protein shuttles the methylamine group of glycine from the P protein to the T protein. The protein is Glycine cleavage system H protein, mitochondrial (ppl) of Drosophila melanogaster (Fruit fly).